The chain runs to 366 residues: D-alanine--D-alanine ligase (366 aa).

An ATP-grasp domain is found at 148–357 (KMTFEQAGLA…FPELVDRLIQ (210 aa)). 184 to 239 (EAALGYPAFVKPANLGSSVGIAKVRSRQELEAALDNAASYDRRLVVEAGVVAREVE) serves as a coordination point for ATP. Residues aspartate 310, glutamate 324, and asparagine 326 each contribute to the Mg(2+) site.

This sequence belongs to the D-alanine--D-alanine ligase family. Mg(2+) serves as cofactor. Requires Mn(2+) as cofactor.

The protein resides in the cytoplasm. The catalysed reaction is 2 D-alanine + ATP = D-alanyl-D-alanine + ADP + phosphate + H(+). Its pathway is cell wall biogenesis; peptidoglycan biosynthesis. In terms of biological role, cell wall formation. This Nostoc punctiforme (strain ATCC 29133 / PCC 73102) protein is D-alanine--D-alanine ligase.